The following is a 363-amino-acid chain: UDP-N-acetylglucosamine--N-acetylmuramyl-(pentapeptide) pyrophosphoryl-undecaprenol N-acetylglucosamine transferase (363 aa).

UDP-N-acetyl-alpha-D-glucosamine is bound by residues 10-12, Asn124, Ser195, Ile250, and Gln295; that span reads TGG.

It belongs to the glycosyltransferase 28 family. MurG subfamily.

Its subcellular location is the cell membrane. It catalyses the reaction di-trans,octa-cis-undecaprenyl diphospho-N-acetyl-alpha-D-muramoyl-L-alanyl-D-glutamyl-meso-2,6-diaminopimeloyl-D-alanyl-D-alanine + UDP-N-acetyl-alpha-D-glucosamine = di-trans,octa-cis-undecaprenyl diphospho-[N-acetyl-alpha-D-glucosaminyl-(1-&gt;4)]-N-acetyl-alpha-D-muramoyl-L-alanyl-D-glutamyl-meso-2,6-diaminopimeloyl-D-alanyl-D-alanine + UDP + H(+). Its pathway is cell wall biogenesis; peptidoglycan biosynthesis. In terms of biological role, cell wall formation. Catalyzes the transfer of a GlcNAc subunit on undecaprenyl-pyrophosphoryl-MurNAc-pentapeptide (lipid intermediate I) to form undecaprenyl-pyrophosphoryl-MurNAc-(pentapeptide)GlcNAc (lipid intermediate II). This chain is UDP-N-acetylglucosamine--N-acetylmuramyl-(pentapeptide) pyrophosphoryl-undecaprenol N-acetylglucosamine transferase, found in Halalkalibacterium halodurans (strain ATCC BAA-125 / DSM 18197 / FERM 7344 / JCM 9153 / C-125) (Bacillus halodurans).